Reading from the N-terminus, the 141-residue chain is Hemoglobin subunit alpha (141 aa).

The Globin domain occupies 1-141 (VLSGTDKTNV…VGLVLTAKYR (141 aa)). Residue histidine 58 coordinates O2. Position 87 (histidine 87) interacts with heme b.

This sequence belongs to the globin family. Heterotetramer of two alpha chains and two beta chains. Red blood cells.

Functionally, involved in oxygen transport from the lung to the various peripheral tissues. This is Hemoglobin subunit alpha (HBA) from Psittacula krameri (Rose-ringed parakeet).